The chain runs to 359 residues: Dual-specificity RNA methyltransferase RlmN (359 aa).

The Proton acceptor role is filled by Glu98. The Radical SAM core domain occupies 104 to 329 (EPKRGTLCIS…LEHGLTATIR (226 aa)). Cys111 and Cys340 are joined by a disulfide. [4Fe-4S] cluster contacts are provided by Cys118, Cys122, and Cys125. Residues 166–167 (GE), Ser198, 220–222 (SLH), and Asn297 each bind S-adenosyl-L-methionine. Cys340 serves as the catalytic S-methylcysteine intermediate.

This sequence belongs to the radical SAM superfamily. RlmN family. Requires [4Fe-4S] cluster as cofactor.

Its subcellular location is the cytoplasm. The enzyme catalyses adenosine(2503) in 23S rRNA + 2 reduced [2Fe-2S]-[ferredoxin] + 2 S-adenosyl-L-methionine = 2-methyladenosine(2503) in 23S rRNA + 5'-deoxyadenosine + L-methionine + 2 oxidized [2Fe-2S]-[ferredoxin] + S-adenosyl-L-homocysteine. The catalysed reaction is adenosine(37) in tRNA + 2 reduced [2Fe-2S]-[ferredoxin] + 2 S-adenosyl-L-methionine = 2-methyladenosine(37) in tRNA + 5'-deoxyadenosine + L-methionine + 2 oxidized [2Fe-2S]-[ferredoxin] + S-adenosyl-L-homocysteine. Its function is as follows. Specifically methylates position 2 of adenine 2503 in 23S rRNA and position 2 of adenine 37 in tRNAs. m2A2503 modification seems to play a crucial role in the proofreading step occurring at the peptidyl transferase center and thus would serve to optimize ribosomal fidelity. This chain is Dual-specificity RNA methyltransferase RlmN, found in Halorhodospira halophila (strain DSM 244 / SL1) (Ectothiorhodospira halophila (strain DSM 244 / SL1)).